A 246-amino-acid polypeptide reads, in one-letter code: MAGHSKWANIKHRKAAQDAQRGKIFTKLIRELVTAAKLGGGDTSSNPRLRAAVDKALSNNMTRDTINRAIDRGVGGGDDTNMETKVYEGYGPGGTAVMVECLSDNANRTISQVRPSFTKCGGNLGTEGSVGYLFSKKGLILIASADEDALTEAAIEAGADDIQPQEDGSFEIYTAWEDLGSVRDGIEAAGFKVENAEVTMIPSTTVQLDAETAPKLLDLINRLEDCDDVQNVYHNGEISDEVAALL.

It belongs to the TACO1 family.

It localises to the cytoplasm. The chain is Probable transcriptional regulatory protein HAPS_0943 from Glaesserella parasuis serovar 5 (strain SH0165) (Haemophilus parasuis).